The primary structure comprises 86 residues: Large ribosomal subunit protein uL23 (86 aa).

The protein belongs to the universal ribosomal protein uL23 family. As to quaternary structure, part of the 50S ribosomal subunit. Contacts protein L29.

In terms of biological role, binds to 23S rRNA. One of the proteins that surrounds the polypeptide exit tunnel on the outside of the ribosome. This chain is Large ribosomal subunit protein uL23, found in Methanobrevibacter smithii (strain ATCC 35061 / DSM 861 / OCM 144 / PS).